The primary structure comprises 313 residues: MNKLVFCLMGPTASGKTGLACELLTHFPFEIISVDSAMIYRDMNIGTAKPSIHELQRAPHYLIDIKDPVESYSAAQFCTDALSLCAEIIKRGNIPLLVGGTMMYFNALQKGLATLPEADEAVRKRLEEEALSQGWDFLYQKLSQLDPVTAARIHAHDTQRIQRALEVYYLTGSTLSTYLTGPHVQPDYYFVNLALFPEQRSWLHERIAQRFDAMLSEGFIEEVQQLQAKWPIQINLPSMRCVGYRQILEYLAGHYDYETMREKGIAATRQLAKRQLTWLRHWEGALFYDSQNVGFNIDIIAKIREILDNTVSN.

10–17 serves as a coordination point for ATP; that stretch reads GPTASGKT. 12–17 contacts substrate; it reads TASGKT. Interaction with substrate tRNA regions lie at residues 35–38, 159–163, and 240–245; these read DSAM, QRIQR, and RCVGYR.

This sequence belongs to the IPP transferase family. In terms of assembly, monomer. The cofactor is Mg(2+).

The catalysed reaction is adenosine(37) in tRNA + dimethylallyl diphosphate = N(6)-dimethylallyladenosine(37) in tRNA + diphosphate. Functionally, catalyzes the transfer of a dimethylallyl group onto the adenine at position 37 in tRNAs that read codons beginning with uridine, leading to the formation of N6-(dimethylallyl)adenosine (i(6)A). In Legionella pneumophila (strain Paris), this protein is tRNA dimethylallyltransferase.